A 467-amino-acid chain; its full sequence is Membrane-bound acylglycerophosphatidylinositol O-acyltransferase mboat7 (467 aa).

At 1 to 5 (MSPDE) the chain is on the cytoplasmic side. Residues 6–22 (LVYLGILAATIPVGFLF) form a helical membrane-spanning segment. Over 23–33 (RYLSPPVKQGA) the chain is Lumenal. A helical membrane pass occupies residues 34–57 (ALLLGLIISIATCGIHTLHSLCTV). The Cytoplasmic portion of the chain corresponds to 58 to 73 (LGTWIIIKINWRSAPA). The chain crosses the membrane as a helical span at residues 74–93 (LSLAWTFLYLLFFRLVTWFG). Residues 94 to 193 (LPQPTPFANA…LPGKEPCLQR (100 aa)) lie on the Lumenal side of the membrane. A helical membrane pass occupies residues 194–211 (LKMVPVYGLLFIAVNSVF). Topologically, residues 212–230 (PLSYVRTEDFLEHNYFYRF) are cytoplasmic. Residues 231–260 (FYMVAIFFVFRMRFYSAWCGAEAGCISAGL) traverse the membrane as a helical segment. Residues 261–421 (GCYPQGALSK…LKASDTISYW (161 aa)) lie on the Lumenal side of the membrane. N-linked (GlcNAc...) asparagine glycosylation occurs at asparagine 316. The chain crosses the membrane as a helical span at residues 422–442 (SSIYFVIHIIAIVCIAVGQFM). Residues 443–467 (KGGRKREKRERGEGEKEDAVREKAE) are Cytoplasmic-facing. Positions 447–467 (KREKRERGEGEKEDAVREKAE) are disordered. Residues 451–467 (RERGEGEKEDAVREKAE) show a composition bias toward basic and acidic residues.

This sequence belongs to the membrane-bound acyltransferase family.

The protein resides in the endoplasmic reticulum membrane. It carries out the reaction a 1-acyl-sn-glycero-3-phospho-(1D-myo-inositol) + (5Z,8Z,11Z,14Z)-eicosatetraenoyl-CoA = a 1-acyl-2-(5Z,8Z,11Z,14Z-eicosatetraenoyl)-sn-glycero-3-phospho-(1D-myo-inositol) + CoA. The enzyme catalyses (5Z,8Z,11Z,14Z)-eicosatetraenoyl-CoA + 1-hexadecanoyl-sn-glycero-3-phosphocholine = 1-hexadecanoyl-2-(5Z,8Z,11Z,14Z-eicosatetraenoyl)-sn-glycero-3-phosphocholine + CoA. It catalyses the reaction a 1-acyl-sn-glycero-3-phospho-(1D-myo-inositol) + an acyl-CoA = a 1,2-diacyl-sn-glycero-3-phospho-(1D-myo-inositol) + CoA. The catalysed reaction is 1-octadecanoyl-sn-glycero-3-phospho-(1D-myo-inositol) + (5Z,8Z,11Z,14Z)-eicosatetraenoyl-CoA = 1-octadecanoyl-2-(5Z,8Z,11Z,14Z-eicosatetraenoyl)-sn-glycero-3-phospho-(1D-myo-inositol) + CoA. Its pathway is lipid metabolism; phospholipid metabolism. In terms of biological role, acyltransferase which catalyzes the transfer of an acyl group from an acyl-CoA to a lysophosphatidylinositol (1-acylglycerophosphatidylinositol or LPI) leading to the production of a phosphatidylinositol (1,2-diacyl-sn-glycero-3-phosphoinositol or PI) and participates in the reacylation step of the phospholipid remodeling pathway also known as the Lands cycle. Prefers arachidonoyl-CoA as the acyl donor, thus contributing to the regulation of free levels arachidonic acid in cell. This chain is Membrane-bound acylglycerophosphatidylinositol O-acyltransferase mboat7 (mboat7), found in Danio rerio (Zebrafish).